The chain runs to 525 residues: Peptide chain release factor 3 (525 aa).

Residues 9–276 (AKRRTFAIIS…GFTRYAPAPQ (268 aa)) form the tr-type G domain. Residues 18–25 (SHPDAGKT), 86–90 (DTPGH), and 140–143 (NKFD) contribute to the GTP site.

It belongs to the TRAFAC class translation factor GTPase superfamily. Classic translation factor GTPase family. PrfC subfamily.

The protein localises to the cytoplasm. Functionally, increases the formation of ribosomal termination complexes and stimulates activities of RF-1 and RF-2. It binds guanine nucleotides and has strong preference for UGA stop codons. It may interact directly with the ribosome. The stimulation of RF-1 and RF-2 is significantly reduced by GTP and GDP, but not by GMP. The protein is Peptide chain release factor 3 of Francisella tularensis subsp. holarctica (strain FTNF002-00 / FTA).